The following is a 353-amino-acid chain: DNA integrity scanning protein DisA (353 aa).

A DAC domain is found at 6–144 (DKELMNILKI…GGIKYVLRDS (139 aa)). ATP is bound by residues glycine 73, leucine 91, and 104–108 (TRHRT).

It belongs to the DisA family. In terms of assembly, homooctamer. It depends on Mg(2+) as a cofactor.

It carries out the reaction 2 ATP = 3',3'-c-di-AMP + 2 diphosphate. Functionally, participates in a DNA-damage check-point that is active prior to asymmetric division when DNA is damaged. DisA forms globular foci that rapidly scan along the chromosomes during sporulation, searching for lesions. When a lesion is present, DisA pauses at the lesion site. This triggers a cellular response that culminates in a temporary block in sporulation initiation. In terms of biological role, also has diadenylate cyclase activity, catalyzing the condensation of 2 ATP molecules into cyclic di-AMP (c-di-AMP). c-di-AMP acts as a signaling molecule that couples DNA integrity with progression of sporulation. The rise in c-di-AMP level generated by DisA while scanning the chromosome, operates as a positive signal that advances sporulation; upon encountering a lesion, the DisA focus arrests at the damaged site and halts c-di-AMP synthesis. The sequence is that of DNA integrity scanning protein DisA from Clostridium botulinum (strain Okra / Type B1).